Reading from the N-terminus, the 251-residue chain is 3-deoxy-manno-octulosonate cytidylyltransferase (251 aa).

Belongs to the KdsB family.

It localises to the cytoplasm. The enzyme catalyses 3-deoxy-alpha-D-manno-oct-2-ulosonate + CTP = CMP-3-deoxy-beta-D-manno-octulosonate + diphosphate. It functions in the pathway nucleotide-sugar biosynthesis; CMP-3-deoxy-D-manno-octulosonate biosynthesis; CMP-3-deoxy-D-manno-octulosonate from 3-deoxy-D-manno-octulosonate and CTP: step 1/1. The protein operates within bacterial outer membrane biogenesis; lipopolysaccharide biosynthesis. Its function is as follows. Activates KDO (a required 8-carbon sugar) for incorporation into bacterial lipopolysaccharide in Gram-negative bacteria. This chain is 3-deoxy-manno-octulosonate cytidylyltransferase, found in Vibrio parahaemolyticus serotype O3:K6 (strain RIMD 2210633).